Consider the following 341-residue polypeptide: Ribosomal RNA small subunit methyltransferase H (341 aa).

Residues 47-49 (GGY), aspartate 64, phenylalanine 91, aspartate 109, and glutamine 116 each bind S-adenosyl-L-methionine. The disordered stretch occupies residues 292 to 319 (VAASEEEASRNPRARSAKLRAGVRTEAP).

It belongs to the methyltransferase superfamily. RsmH family.

Its subcellular location is the cytoplasm. The enzyme catalyses cytidine(1402) in 16S rRNA + S-adenosyl-L-methionine = N(4)-methylcytidine(1402) in 16S rRNA + S-adenosyl-L-homocysteine + H(+). Its function is as follows. Specifically methylates the N4 position of cytidine in position 1402 (C1402) of 16S rRNA. The chain is Ribosomal RNA small subunit methyltransferase H from Rhizobium meliloti (strain 1021) (Ensifer meliloti).